Consider the following 151-residue polypeptide: Large ribosomal subunit protein eL19 (151 aa).

Basic residues predominate over residues 57–81 (KKGISSARVKKLKEQRKKGRRRGPG). The segment at 57 to 95 (KKGISSARVKKLKEQRKKGRRRGPGSRRGAAGARTPPKE) is disordered.

This sequence belongs to the eukaryotic ribosomal protein eL19 family. As to quaternary structure, part of the 50S ribosomal subunit.

In terms of biological role, binds to the 23S rRNA. This Methanocaldococcus jannaschii (strain ATCC 43067 / DSM 2661 / JAL-1 / JCM 10045 / NBRC 100440) (Methanococcus jannaschii) protein is Large ribosomal subunit protein eL19.